A 429-amino-acid polypeptide reads, in one-letter code: 4-hydroxyphenylacetate degradation bifunctional isomerase/decarboxylase (429 aa).

Approximate repeat units follow at residues 1 to 215 and 216 to 429; these read MKGT…NQTF and TWPL…ESAN. A divalent metal cation is bound by residues glutamate 276, glutamate 278, and aspartate 307.

It belongs to the FAH family. Monomer. Mg(2+) is required as a cofactor.

The catalysed reaction is (2E,4Z)-5-hydroxypenta-2,4-diene-1,2,5-tricarboxylate = (3E,5R)-5-carboxy-2-oxohept-3-enedioate. The enzyme catalyses (3E,5R)-5-carboxy-2-oxohept-3-enedioate + H(+) = (4Z)-2-oxohept-4-enedioate + CO2. Its pathway is aromatic compound metabolism; 4-hydroxyphenylacetate degradation; pyruvate and succinate semialdehyde from 4-hydroxyphenylacetate: step 4/7. It functions in the pathway aromatic compound metabolism; 4-hydroxyphenylacetate degradation; pyruvate and succinate semialdehyde from 4-hydroxyphenylacetate: step 5/7. Functionally, decarboxylates OPET (5-oxo-pent-3-ene-1,2,5-tricarboxylic acid) into HHDD (2-hydroxy-hept-2,4-diene-1,7-dioate) and isomerizes it to OHED (2-oxo-hept-3-ene-1,7-dioate). In Salmonella dublin, this protein is 4-hydroxyphenylacetate degradation bifunctional isomerase/decarboxylase (hpaG).